Consider the following 639-residue polypeptide: Alpha-dioxygenase 1 (639 aa).

The Proton acceptor role is filled by histidine 163. Aspartate 164 contacts Ca(2+). Histidine 168 provides a ligand contact to heme b. Residues threonine 216, tryptophan 218, aspartate 220, and serine 222 each coordinate Ca(2+). Histidine 389, arginine 486, and arginine 490 together coordinate heme b.

Belongs to the peroxidase family. In terms of assembly, forms monomers in solution. It depends on heme b as a cofactor. Ca(2+) serves as cofactor. As to expression, expressed in roots (epiderm), mature flowers (e.g. anthers) and senescing leaves.

The protein localises to the lipid droplet. It carries out the reaction a 1,2-saturated fatty acid + O2 = a (2R)-2-hydroperoxy fatty acid. It catalyses the reaction (9Z,12Z,15Z)-octadecatrienoate + O2 = (R)-2-hydroperoxy-(9Z,12Z,15Z)-octadecatrienoate. The enzyme catalyses hexadecanoate + O2 = (2R)-2-hydroperoxyhexadecanoate. The catalysed reaction is (9Z,12Z)-octadecadienoate + O2 = (2R,9Z,12Z)-2-hydroperoxyoctadecadienoate. It carries out the reaction (9Z)-octadecenoate + O2 = (2R,9Z)-2-hydroperoxyoctadecenoate. Functionally, alpha-dioxygenase that catalyzes the primary oxygenation step of a variety of 14-20 carbon fatty acids, containing up to three unsaturated bonds, into their corresponding 2R-hydroperoxides. Involved in the production of oxylipins that function in cell signaling, wound healing, and protection from infection. Mediates protection against oxidative stress and cell death, probably by generating some lipid-derived molecules. Promotes local and systemic plant defense in a salicylic acid (SA)-dependent manner, including the establishment of systemic acquired resistance (SAR) in response to incompatible interaction. Involved in a negative regulation of abscisic acid (ABA)-mediated signaling pathway. The chain is Alpha-dioxygenase 1 from Arabidopsis thaliana (Mouse-ear cress).